A 44-amino-acid chain; its full sequence is Thymosin beta (44 aa).

Residues 1 to 17 (MSDKPDVKEVESFDKTT) are compositionally biased toward basic and acidic residues. Residues 1 to 44 (MSDKPDVKEVESFDKTTLKKTTTNEKNTLPTKEVIEQEKSGGSD) are disordered. Residues 19–32 (KKTTTNEKNTLPTK) show a composition bias toward low complexity. The span at 33 to 44 (EVIEQEKSGGSD) shows a compositional bias: basic and acidic residues.

It belongs to the thymosin beta family.

The protein localises to the cytoplasm. It localises to the cytoskeleton. In terms of biological role, plays an important role in the organization of the cytoskeleton. Binds to and sequesters actin monomers (G actin) and therefore inhibits actin polymerization. In Gillichthys mirabilis (Long-jawed mudsucker), this protein is Thymosin beta.